The primary structure comprises 355 residues: MSADAAAGEPLPRLCCLEKGPNGYGFHLHGEKGKVGQFIRLVEPGSPAEKSGLLAGDRLVEVNGENVEKETHQQVVSRIRAALNAVRLLVVDPETDERLKKLGVSIREELLRPQEKSEQAEPPAAADTHEAGDQNEAEKSHLRELRPRLCTMKKGPNGYGFNLHSDKSKPGQFIRAVDPDSPAEASGLRAQDRIVEVNGVCMEGKQHGDVVSAIKGGGDEAKLLVVDKETDEFFKKCKVIPSQEHLDGPLPEPFSNGEIQKESSREALVEPASESPRPALARSASSDTSEELNSQDSPKRQVSTEPSSTSSSSSDPILDLNISLAVAKERAHQKRSSKRAPQMDWSKKNELFSNL.

S2 carries the post-translational modification N-acetylserine. S2 and S46 each carry phosphoserine. The region spanning 14–94 (LCCLEKGPNG…AVRLLVVDPE (81 aa)) is the PDZ 1 domain. Basic and acidic residues-rich tracts occupy residues 110–119 (LLRPQEKSEQ) and 127–146 (DTHE…RELR). The disordered stretch occupies residues 110–146 (LLRPQEKSEQAEPPAAADTHEAGDQNEAEKSHLRELR). The PDZ 2 domain occupies 149–229 (LCTMKKGPNG…EAKLLVVDKE (81 aa)). Residues 244–355 (EHLDGPLPEP…SKKNELFSNL (112 aa)) are disordered. Positions 259–268 (IQKESSREAL) are enriched in basic and acidic residues. 4 positions are modified to phosphoserine: S264, S275, S285, and S286. A compositionally biased stretch (low complexity) spans 270-286 (EPASESPRPALARSASS). T288 carries the post-translational modification Phosphothreonine. Phosphoserine occurs at positions 289, 294, and 297. Over residues 303-323 (STEPSSTSSSSSDPILDLNIS) the composition is skewed to low complexity. Over residues 345–355 (WSKKNELFSNL) the composition is skewed to basic and acidic residues.

Homodimer, and heterodimer with NHERF2. Binds the N-termini of EZR, RDX and MSN. Binds the C-termini of PDGFRA, PDGFRB, ADRB2 and NOS2. Binds ARHGAP17, EPI64, RACK1, OPRK1, GNAQ, CTNNB1, PLCB3 and CLCN3. Forms a complex with CFTR and SLC4A7. Forms a complex with SLC4A7 and ATP6V1B1. Binds PDZK1. Binds the C-terminus of PAG1. In resting T-cells, part of a PAG1-NHERF1-MSN complex which is disrupted upon TCR activation. Directly interacts with HTR4. Interacts with MCC. Interacts with TRPC4 (via the PDZ-binding domain). Interacts (via the PDZ 1 domain) with PODXL (via the C-terminal PDZ-binding motif DTHL); interaction is not detected in glomerular epithelium cells. Interacts (via the PDZ 1 domain) with PODXL (via the C-terminal PDZ-binding motif DTHL); the interaction take place early in the secretory pathway and is necessary for its apical membrane sorting. Interacts with SLC34A1. Interacts with CFTR, SLC26A3 and SLC26A6. Interacts (via PDZ domains) with ACE2 (via PDZ-binding motif); the interaction may enhance ACE2 membrane residence. As to expression, expressed in spermatogenic cells.

The protein resides in the cytoplasm. It localises to the apical cell membrane. It is found in the cell projection. Its subcellular location is the filopodium. The protein localises to the ruffle. The protein resides in the microvillus. It localises to the endomembrane system. Its function is as follows. Scaffold protein that connects plasma membrane proteins with members of the ezrin/moesin/radixin family and thereby helps to link them to the actin cytoskeleton and to regulate their surface expression. Necessary for recycling of internalized ADRB2. Was first known to play a role in the regulation of the activity and subcellular location of SLC9A3. Necessary for cAMP-mediated phosphorylation and inhibition of SLC9A3. May enhance Wnt signaling. May participate in HTR4 targeting to microvilli. Involved in the regulation of phosphate reabsorption in the renal proximal tubules. Involved in sperm capacitation. May participate in the regulation of the chloride and bicarbonate homeostasis in spermatozoa. The sequence is that of Na(+)/H(+) exchange regulatory cofactor NHE-RF1 (Nherf1) from Mus musculus (Mouse).